Here is a 149-residue protein sequence, read N- to C-terminus: Transcriptional repressor NrdR (149 aa).

A zinc finger lies at 3–34 (CPFCSATDTKVIDSRLVSDGHQVRRRRQCLAC). The region spanning 49-139 (PKVIKSNGNR…VYRSFEDIKE (91 aa)) is the ATP-cone domain.

It belongs to the NrdR family. Requires Zn(2+) as cofactor.

Negatively regulates transcription of bacterial ribonucleotide reductase nrd genes and operons by binding to NrdR-boxes. The protein is Transcriptional repressor NrdR of Aliivibrio salmonicida (strain LFI1238) (Vibrio salmonicida (strain LFI1238)).